We begin with the raw amino-acid sequence, 826 residues long: Zinc phosphodiesterase ELAC protein 2 (826 aa).

The transit peptide at 1-16 (MWALCSLLRSATGRTM) directs the protein to the mitochondrion. Residues 15 to 27 (TMSQGRTISQGSA) show a composition bias toward polar residues. Disordered regions lie at residues 15 to 53 (TMSQ…GSSG) and 187 to 231 (SEQR…VSQR). Serine 199, serine 208, serine 212, serine 229, serine 618, and serine 736 each carry phosphoserine. The segment covering 208–224 (SPERSSDSESNESEPHL) has biased composition (basic and acidic residues). Positions 798-826 (ALTDDLEDGEPQQKRAHTEEPQSKKVRAQ) are disordered. The segment covering 808-820 (PQQKRAHTEEPQS) has biased composition (basic and acidic residues).

It belongs to the RNase Z family. As to quaternary structure, homodimer. Interacts with PTCD1. The cofactor is Zn(2+).

The protein resides in the mitochondrion. It localises to the mitochondrion matrix. The protein localises to the mitochondrion nucleoid. It is found in the nucleus. It catalyses the reaction Endonucleolytic cleavage of RNA, removing extra 3' nucleotides from tRNA precursor, generating 3' termini of tRNAs. A 3'-hydroxy group is left at the tRNA terminus and a 5'-phosphoryl group is left at the trailer molecule.. Zinc phosphodiesterase, which displays mitochondrial tRNA 3'-processing endonuclease activity. Involved in tRNA maturation, by removing a 3'-trailer from precursor tRNA. Associates with mitochondrial DNA complexes at the nucleoids to initiate RNA processing and ribosome assembly. In Macaca fascicularis (Crab-eating macaque), this protein is Zinc phosphodiesterase ELAC protein 2 (ELAC2).